Here is a 187-residue protein sequence, read N- to C-terminus: Peptide deformylase (187 aa).

2 residues coordinate Fe cation: C94 and H136. E137 is an active-site residue. Fe cation is bound at residue H140.

Belongs to the polypeptide deformylase family. The cofactor is Fe(2+).

The enzyme catalyses N-terminal N-formyl-L-methionyl-[peptide] + H2O = N-terminal L-methionyl-[peptide] + formate. Removes the formyl group from the N-terminal Met of newly synthesized proteins. Requires at least a dipeptide for an efficient rate of reaction. N-terminal L-methionine is a prerequisite for activity but the enzyme has broad specificity at other positions. This is Peptide deformylase from Chlorobaculum parvum (strain DSM 263 / NCIMB 8327) (Chlorobium vibrioforme subsp. thiosulfatophilum).